Reading from the N-terminus, the 547-residue chain is Glucose-6-phosphate isomerase 1 (547 aa).

Glu353 acts as the Proton donor in catalysis. Catalysis depends on residues His384 and Lys512.

The protein belongs to the GPI family.

The protein resides in the cytoplasm. The catalysed reaction is alpha-D-glucose 6-phosphate = beta-D-fructose 6-phosphate. It functions in the pathway carbohydrate biosynthesis; gluconeogenesis. Its pathway is carbohydrate degradation; glycolysis; D-glyceraldehyde 3-phosphate and glycerone phosphate from D-glucose: step 2/4. Functionally, catalyzes the reversible isomerization of glucose-6-phosphate to fructose-6-phosphate. This chain is Glucose-6-phosphate isomerase 1, found in Chromobacterium violaceum (strain ATCC 12472 / DSM 30191 / JCM 1249 / CCUG 213 / NBRC 12614 / NCIMB 9131 / NCTC 9757 / MK).